Reading from the N-terminus, the 101-residue chain is Acylphosphatase-1 (101 aa).

Serine 2 carries the post-translational modification N-acetylserine. N-acetylalanine is present on serine 2. The Acylphosphatase-like domain maps to 11–101 (SVDYEVFGKV…LDYSDFQIVK (91 aa)). Active-site residues include arginine 26 and asparagine 44.

The protein belongs to the acylphosphatase family. Organ-common type isozyme is found in many different tissues.

It catalyses the reaction an acyl phosphate + H2O = a carboxylate + phosphate + H(+). This Sus scrofa (Pig) protein is Acylphosphatase-1 (ACYP1).